A 169-amino-acid chain; its full sequence is MYQAVAFLAMIVGTHTVSLRIQEGCSHLPSCCPSKEQEPPEEWLKWSSASVSPPEPLSHTHHAESCRASKDGPLNSRAISPWSYELDRDLNRVPQDLYHARCLCPHCVSLQTGSHMDPLGNSVPLYHNQTVFYRRPCHGEEGTHRRYCLERRLYRVSLACVCVRPRVMA.

Residues M1 to T16 form the signal peptide. The interval S47–K70 is disordered. The segment covering H61–K70 has biased composition (basic and acidic residues). 2 disulfides stabilise this stretch: C102/C160 and C107/C162. The N-linked (GlcNAc...) asparagine glycan is linked to N128.

Belongs to the IL-17 family.

The protein resides in the secreted. In terms of biological role, cytokine produced by various cells such as eosinophils, T-helper type 2 (Th2) cells or epithelial cells that plays a role in internal safety of adaptive immune responses by regulating cytokine production. Promotes and augments T-helper type 2 responses locally or systemically. Exerts its activity via its receptor composed of IL17RA and IL17RB for signal transduction. In turn, stimulates the JAK2-STAT5A pathway and promotes the secretion of type-2 associated cytokines including IL4, IL9 and IL13. Also induces the release of IL8, and IL6 from eosinophils through the combined activation of MAPK and NF-kappa-B pathways. Inhibits the differentiation of T-helper (Th17) cells via the production of IL4, IL5 and IL13. This chain is Interleukin-25 (Il25), found in Mus musculus (Mouse).